We begin with the raw amino-acid sequence, 496 residues long: Cobyric acid synthase (496 aa).

Positions 252-442 (DLAVAVIRLP…LHGCFDSDTY (191 aa)) constitute a GATase cobBQ-type domain. The active-site Nucleophile is the cysteine 333. Histidine 434 is a catalytic residue.

This sequence belongs to the CobB/CobQ family. CobQ subfamily.

Its pathway is cofactor biosynthesis; adenosylcobalamin biosynthesis. Its function is as follows. Catalyzes amidations at positions B, D, E, and G on adenosylcobyrinic A,C-diamide. NH(2) groups are provided by glutamine, and one molecule of ATP is hydrogenolyzed for each amidation. The polypeptide is Cobyric acid synthase (Desulforudis audaxviator (strain MP104C)).